Here is a 492-residue protein sequence, read N- to C-terminus: Argininosuccinate lyase (492 aa).

The protein belongs to the lyase 1 family. Argininosuccinate lyase subfamily.

The protein localises to the cytoplasm. The catalysed reaction is 2-(N(omega)-L-arginino)succinate = fumarate + L-arginine. Its pathway is amino-acid biosynthesis; L-arginine biosynthesis; L-arginine from L-ornithine and carbamoyl phosphate: step 3/3. This is Argininosuccinate lyase from Methanoculleus marisnigri (strain ATCC 35101 / DSM 1498 / JR1).